We begin with the raw amino-acid sequence, 236 residues long: Small ribosomal subunit protein uS2c (236 aa).

It belongs to the universal ribosomal protein uS2 family.

It is found in the plastid. Its subcellular location is the chloroplast. In Barbarea verna (Land cress), this protein is Small ribosomal subunit protein uS2c (rps2).